The following is a 289-amino-acid chain: Release factor glutamine methyltransferase (289 aa).

S-adenosyl-L-methionine contacts are provided by residues 130–134 (GTGTG), aspartate 153, tryptophan 182, and asparagine 196. 196 to 199 (NPPY) provides a ligand contact to substrate.

It belongs to the protein N5-glutamine methyltransferase family. PrmC subfamily.

It carries out the reaction L-glutaminyl-[peptide chain release factor] + S-adenosyl-L-methionine = N(5)-methyl-L-glutaminyl-[peptide chain release factor] + S-adenosyl-L-homocysteine + H(+). Methylates the class 1 translation termination release factors RF1/PrfA and RF2/PrfB on the glutamine residue of the universally conserved GGQ motif. The protein is Release factor glutamine methyltransferase of Agrobacterium fabrum (strain C58 / ATCC 33970) (Agrobacterium tumefaciens (strain C58)).